A 98-amino-acid polypeptide reads, in one-letter code: Large ribosomal subunit protein uL23 (98 aa).

The protein belongs to the universal ribosomal protein uL23 family. In terms of assembly, part of the 50S ribosomal subunit. Contacts protein L29, and trigger factor when it is bound to the ribosome.

In terms of biological role, one of the early assembly proteins it binds 23S rRNA. One of the proteins that surrounds the polypeptide exit tunnel on the outside of the ribosome. Forms the main docking site for trigger factor binding to the ribosome. The protein is Large ribosomal subunit protein uL23 of Methylobacterium radiotolerans (strain ATCC 27329 / DSM 1819 / JCM 2831 / NBRC 15690 / NCIMB 10815 / 0-1).